We begin with the raw amino-acid sequence, 409 residues long: Translation initiation factor 2 subunit gamma (409 aa).

Residues 7–203 enclose the tr-type G domain; sequence QPEVNIGLVG…AIEREIPTPE (197 aa). A G1 region spans residues 16–23; it reads GHVDHGKT. Positions 19, 23, 44, and 46 each coordinate Mg(2+). 19–24 is a GTP binding site; that stretch reads DHGKTT. A G2 region spans residues 44–48; that stretch reads GISIR. Positions 90 to 93 are G3; the sequence is DAPG. GTP-binding positions include 146–149 and 181–183; these read NKID and SAQ. Residues 146 to 149 form a G4 region; that stretch reads NKID. The tract at residues 181-183 is G5; that stretch reads SAQ.

This sequence belongs to the TRAFAC class translation factor GTPase superfamily. Classic translation factor GTPase family. EIF2G subfamily. As to quaternary structure, heterotrimer composed of an alpha, a beta and a gamma chain. It depends on Mg(2+) as a cofactor.

The catalysed reaction is GTP + H2O = GDP + phosphate + H(+). Functionally, eIF-2 functions in the early steps of protein synthesis by forming a ternary complex with GTP and initiator tRNA. The protein is Translation initiation factor 2 subunit gamma of Haloquadratum walsbyi (strain DSM 16790 / HBSQ001).